Here is a 130-residue protein sequence, read N- to C-terminus: MHLRLLMSTVITATLIVSNNALTSPSDKTKTRALRGASTVGIAADNLLAAHFSPTLKHKESRGDYNNIQTERHRKRRLYDAPHHPEFYDIAVHQVPSDKSYGGGPAIAIFAGVAATFILIDYLIRHFTEN.

A signal peptide spans 1–21 (MHLRLLMSTVITATLIVSNNA). The RxLR-dEER signature appears at 32 to 62 (RALRGASTVGIAADNLLAAHFSPTLKHKESR). A helical transmembrane segment spans residues 104–124 (GPAIAIFAGVAATFILIDYLI).

This sequence belongs to the RxLR effector family.

Its subcellular location is the secreted. It is found in the host cytoplasm. The protein localises to the host nucleus. The protein resides in the membrane. Its function is as follows. Effector that acts as a broad suppressor of cell death to interrupt plant immunity. Inhibits cell death induced by cell death-inducing proteins, including the PAMP elicitor INF1 from P.infestans. The protein is Secreted RxLR effector protein 66 of Plasmopara viticola (Downy mildew of grapevine).